A 93-amino-acid polypeptide reads, in one-letter code: Small ribosomal subunit protein uS19 (93 aa).

The interval E73–K93 is disordered.

The protein belongs to the universal ribosomal protein uS19 family.

In terms of biological role, protein S19 forms a complex with S13 that binds strongly to the 16S ribosomal RNA. This is Small ribosomal subunit protein uS19 from Phytoplasma mali (strain AT).